The following is a 208-amino-acid chain: Large ribosomal subunit protein uL4 (208 aa).

The disordered stretch occupies residues 42-77 (SMRQGTHKTKTKTEVSGGGRKPWRQKGTGRARQGSI).

It belongs to the universal ribosomal protein uL4 family. In terms of assembly, part of the 50S ribosomal subunit.

Functionally, one of the primary rRNA binding proteins, this protein initially binds near the 5'-end of the 23S rRNA. It is important during the early stages of 50S assembly. It makes multiple contacts with different domains of the 23S rRNA in the assembled 50S subunit and ribosome. Forms part of the polypeptide exit tunnel. The chain is Large ribosomal subunit protein uL4 from Spiroplasma kunkelii.